The following is a 469-amino-acid chain: Glutamate--tRNA ligase (469 aa).

The 'HIGH' region motif lies at 9-19; the sequence is PSPTGYLHVGG. C98, C100, C125, and D127 together coordinate Zn(2+). A 'KMSKS' region motif is present at residues 237–241; that stretch reads KLSKR. K240 contacts ATP.

The protein belongs to the class-I aminoacyl-tRNA synthetase family. Glutamate--tRNA ligase type 1 subfamily. Monomer. Requires Zn(2+) as cofactor.

The protein localises to the cytoplasm. It catalyses the reaction tRNA(Glu) + L-glutamate + ATP = L-glutamyl-tRNA(Glu) + AMP + diphosphate. Its function is as follows. Catalyzes the attachment of glutamate to tRNA(Glu) in a two-step reaction: glutamate is first activated by ATP to form Glu-AMP and then transferred to the acceptor end of tRNA(Glu). This chain is Glutamate--tRNA ligase, found in Serratia proteamaculans (strain 568).